Consider the following 374-residue polypeptide: Lipid-A-disaccharide synthase (374 aa).

The protein belongs to the LpxB family.

The catalysed reaction is a lipid X + a UDP-2-N,3-O-bis[(3R)-3-hydroxyacyl]-alpha-D-glucosamine = a lipid A disaccharide + UDP + H(+). It participates in bacterial outer membrane biogenesis; LPS lipid A biosynthesis. Functionally, condensation of UDP-2,3-diacylglucosamine and 2,3-diacylglucosamine-1-phosphate to form lipid A disaccharide, a precursor of lipid A, a phosphorylated glycolipid that anchors the lipopolysaccharide to the outer membrane of the cell. The chain is Lipid-A-disaccharide synthase from Pseudomonas fluorescens (strain ATCC BAA-477 / NRRL B-23932 / Pf-5).